The chain runs to 168 residues: Monothiol glutaredoxin-S7, chloroplastic (168 aa).

The transit peptide at 1 to 54 (MAATAAASVAAISPLPGASLPRPVSARVPLLPRASPPTWRLSVGSARARSTRCL) directs the protein to the chloroplast. In terms of domain architecture, Glutaredoxin spans 67-168 (RATLDKVVGS…QETLEKAMLS (102 aa)). K84 lines the glutathione pocket. C92 contacts [2Fe-2S] cluster. Glutathione contacts are provided by residues R121, F133, and 146-147 (CD).

This sequence belongs to the glutaredoxin family. CGFS subfamily.

It is found in the plastid. It localises to the chloroplast. Its function is as follows. May only reduce GSH-thiol disulfides, but not protein disulfides. In Oryza sativa subsp. japonica (Rice), this protein is Monothiol glutaredoxin-S7, chloroplastic (GRXS7).